Here is a 268-residue protein sequence, read N- to C-terminus: Tryptophan synthase alpha chain (268 aa).

Catalysis depends on proton acceptor residues glutamate 49 and aspartate 60.

This sequence belongs to the TrpA family. Tetramer of two alpha and two beta chains.

The catalysed reaction is (1S,2R)-1-C-(indol-3-yl)glycerol 3-phosphate + L-serine = D-glyceraldehyde 3-phosphate + L-tryptophan + H2O. It functions in the pathway amino-acid biosynthesis; L-tryptophan biosynthesis; L-tryptophan from chorismate: step 5/5. In terms of biological role, the alpha subunit is responsible for the aldol cleavage of indoleglycerol phosphate to indole and glyceraldehyde 3-phosphate. This chain is Tryptophan synthase alpha chain, found in Aeromonas hydrophila subsp. hydrophila (strain ATCC 7966 / DSM 30187 / BCRC 13018 / CCUG 14551 / JCM 1027 / KCTC 2358 / NCIMB 9240 / NCTC 8049).